The chain runs to 393 residues: Phosphoglycerate kinase (393 aa).

Substrate-binding positions include 21-23 (DLN), R36, 59-62 (HLGR), R113, and R146. ATP-binding positions include K197, E319, and 345-348 (GGDT).

Belongs to the phosphoglycerate kinase family. As to quaternary structure, monomer.

It localises to the cytoplasm. The enzyme catalyses (2R)-3-phosphoglycerate + ATP = (2R)-3-phospho-glyceroyl phosphate + ADP. It participates in carbohydrate degradation; glycolysis; pyruvate from D-glyceraldehyde 3-phosphate: step 2/5. The sequence is that of Phosphoglycerate kinase from Nitratidesulfovibrio vulgaris (strain ATCC 29579 / DSM 644 / CCUG 34227 / NCIMB 8303 / VKM B-1760 / Hildenborough) (Desulfovibrio vulgaris).